Here is a 290-residue protein sequence, read N- to C-terminus: 4-hydroxy-tetrahydrodipicolinate synthase (290 aa).

Threonine 44 contacts pyruvate. Tyrosine 132 functions as the Proton donor/acceptor in the catalytic mechanism. Catalysis depends on lysine 160, which acts as the Schiff-base intermediate with substrate. Residue isoleucine 202 participates in pyruvate binding.

This sequence belongs to the DapA family. Homotetramer; dimer of dimers.

It localises to the cytoplasm. The catalysed reaction is L-aspartate 4-semialdehyde + pyruvate = (2S,4S)-4-hydroxy-2,3,4,5-tetrahydrodipicolinate + H2O + H(+). Its pathway is amino-acid biosynthesis; L-lysine biosynthesis via DAP pathway; (S)-tetrahydrodipicolinate from L-aspartate: step 3/4. Its function is as follows. Catalyzes the condensation of (S)-aspartate-beta-semialdehyde [(S)-ASA] and pyruvate to 4-hydroxy-tetrahydrodipicolinate (HTPA). The polypeptide is 4-hydroxy-tetrahydrodipicolinate synthase (Pelobacter propionicus (strain DSM 2379 / NBRC 103807 / OttBd1)).